The following is a 146-amino-acid chain: Cysteine protease inhibitor 3 (146 aa).

Cystine bridges form between Cys8/Cys60 and Cys109/Cys115.

This sequence belongs to the protease inhibitor I3 (leguminous Kunitz-type inhibitor) family.

It localises to the vacuole. Functionally, inhibitor of cysteine proteases. May protect the plant by inhibiting proteases of invading organisms. The chain is Cysteine protease inhibitor 3 from Solanum tuberosum (Potato).